Here is a 598-residue protein sequence, read N- to C-terminus: Centrosomal protein of 70 kDa (598 aa).

A compositionally biased stretch (polar residues) spans 16–38; sequence DSTKEPLSTVTSQAQDSSLSANR. The disordered stretch occupies residues 16–43; the sequence is DSTKEPLSTVTSQAQDSSLSANRPVTEK. Coiled-coil stretches lie at residues 99–210 and 255–317; these read TRQQ…EEDR and TYKG…NIKL. Residues 484–517 form a TPR repeat; that stretch reads NGVYPRMNEVYARLGEMNNAVRNLQELLGLDSSS.

Directly interacts with tubulin-gamma; this interaction determines centrosomal localization.

Its subcellular location is the cytoplasm. It is found in the cytoskeleton. The protein resides in the microtubule organizing center. The protein localises to the centrosome. Its function is as follows. Plays a role in the organization of both preexisting and nascent microtubules in interphase cells. During mitosis, required for the organization and orientation of the mitotic spindle. This Rattus norvegicus (Rat) protein is Centrosomal protein of 70 kDa (Cep70).